The following is a 329-amino-acid chain: Endonuclease 8-like 2 (329 aa).

P2 (schiff-base intermediate with DNA) is an active-site residue. The active-site Proton donor is the E3. The Proton donor; for beta-elimination activity role is filled by K50. K50 is subject to N6-acetyllysine. At S68 the chain carries Phosphoserine. Residues 68-116 form a disordered region; that stretch reads SLLSEPLREGEQKDKARHHQEASDPSSWSPGGDSAVPSGDDGLQCLGGD. A compositionally biased stretch (basic and acidic residues) spans 73–89; the sequence is PLREGEQKDKARHHQEA. The segment covering 90-102 has biased composition (low complexity); it reads SDPSSWSPGGDSA. N6-acetyllysine is present on K149. N227 provides a ligand contact to DNA. The FPG-type zinc finger occupies 280-316; sequence QIYQKEQCPAGHQVVRESLGPPGGFQRLTWWCPQCQP. The active-site Proton donor; for delta-elimination activity is the R306.

This sequence belongs to the FPG family. As to quaternary structure, binds EP300.

It is found in the nucleus. It catalyses the reaction 2'-deoxyribonucleotide-(2'-deoxyribose 5'-phosphate)-2'-deoxyribonucleotide-DNA = a 3'-end 2'-deoxyribonucleotide-(2,3-dehydro-2,3-deoxyribose 5'-phosphate)-DNA + a 5'-end 5'-phospho-2'-deoxyribonucleoside-DNA + H(+). With respect to regulation, acetylation of Lys-50 leads to loss of DNA nicking activity. Its function is as follows. Involved in base excision repair of DNA damaged by oxidation or by mutagenic agents. Has DNA glycosylase activity towards 5-hydroxyuracil and other oxidized derivatives of cytosine with a preference for mismatched double-stranded DNA (DNA bubbles). Has low or no DNA glycosylase activity towards thymine glycol, 2-hydroxyadenine, hypoxanthine and 8-oxoguanine. Has AP (apurinic/apyrimidinic) lyase activity and introduces nicks in the DNA strand. Cleaves the DNA backbone by beta-delta elimination to generate a single-strand break at the site of the removed base with both 3'- and 5'-phosphates. This Bos taurus (Bovine) protein is Endonuclease 8-like 2 (NEIL2).